Reading from the N-terminus, the 99-residue chain is uncharacterized protein (99 aa).

An N-terminal signal peptide occupies residues 1 to 17 (MMMNSFFPAMALMVLVG). Residue cysteine 18 is the site of N-palmitoyl cysteine attachment. A lipid anchor (S-diacylglycerol cysteine) is attached at cysteine 18.

It localises to the cell membrane. This is an uncharacterized protein from Escherichia coli O157:H7.